The primary structure comprises 247 residues: 3-oxoacyl-[acyl-carrier-protein] reductase MabA (247 aa).

NADP(+) is bound by residues 25 to 27 (RGI), R47, 61 to 62 (DV), G90, Y153, K157, I186, and R197. Residue Y153 is the Proton acceptor of the active site.

It belongs to the short-chain dehydrogenases/reductases (SDR) family. As to quaternary structure, homotetramer.

It localises to the secreted. The protein resides in the cell wall. It catalyses the reaction a (3R)-hydroxyacyl-[ACP] + NADP(+) = a 3-oxoacyl-[ACP] + NADPH + H(+). The protein operates within lipid metabolism; mycolic acid biosynthesis. Part of the mycobacterial fatty acid elongation system FAS-II, which is involved in mycolic acid biosynthesis. Catalyzes the NADPH-dependent reduction of beta-ketoacyl derivatives, the second step of the FAS-II elongation cycle. The chain is 3-oxoacyl-[acyl-carrier-protein] reductase MabA from Mycobacterium bovis (strain ATCC BAA-935 / AF2122/97).